The chain runs to 873 residues: Sine oculis-binding protein homolog (873 aa).

A compositionally biased stretch (basic and acidic residues) spans 1-14 (MAEMEKEGRPPENK). Residues 1-26 (MAEMEKEGRPPENKRSRKPAHPVKRE) are disordered. 2 FCS-type zinc fingers span residues 142 to 180 (DDVS…KCFA) and 216 to 256 (FKNN…KCLN). Disordered regions lie at residues 307 to 338 (ARRK…SDTA), 413 to 485 (RGPP…GAPL), 550 to 608 (KPPS…NQAQ), 742 to 766 (STEG…ELAV), and 779 to 811 (SNCH…NPAD). A compositionally biased stretch (low complexity) spans 312–338 (PSPASAAGQIQGPGPSASTTASPSDTA). Positions 460–485 (IHPPTTPTMPGNPPGLLPPPPPGAPL) are enriched in pro residues. A compositionally biased stretch (polar residues) spans 554 to 570 (GFSSNGENFIPSNSSET). Residues 571-603 (PGGKPPNSSSSPRESKQGSSKPSDSSPSCSGQS) show a composition bias toward low complexity. A compositionally biased stretch (basic and acidic residues) spans 783-793 (LEGDTGKKAGE).

This sequence belongs to the SOBP family.

Functionally, implicated in development of the cochlea. This is Sine oculis-binding protein homolog from Gallus gallus (Chicken).